Reading from the N-terminus, the 251-residue chain is 3-deoxy-manno-octulosonate cytidylyltransferase (251 aa).

It belongs to the KdsB family.

Its subcellular location is the cytoplasm. It catalyses the reaction 3-deoxy-alpha-D-manno-oct-2-ulosonate + CTP = CMP-3-deoxy-beta-D-manno-octulosonate + diphosphate. It functions in the pathway nucleotide-sugar biosynthesis; CMP-3-deoxy-D-manno-octulosonate biosynthesis; CMP-3-deoxy-D-manno-octulosonate from 3-deoxy-D-manno-octulosonate and CTP: step 1/1. The protein operates within bacterial outer membrane biogenesis; lipopolysaccharide biosynthesis. Activates KDO (a required 8-carbon sugar) for incorporation into bacterial lipopolysaccharide in Gram-negative bacteria. The sequence is that of 3-deoxy-manno-octulosonate cytidylyltransferase from Alcanivorax borkumensis (strain ATCC 700651 / DSM 11573 / NCIMB 13689 / SK2).